A 520-amino-acid chain; its full sequence is RNA-binding protein MEX3A (520 aa).

The segment at 49-111 (GLGEPPAPTA…QPPTAPKGAS (63 aa)) is disordered. Positions 60 to 69 (EDGGGGGGGA) are enriched in gly residues. The span at 73-91 (PAAPPQPAPPPPPAAPPAA) shows a compositional bias: pro residues. 2 KH domains span residues 132–193 (TTEC…RREI) and 223–284 (QVTI…REEI). S338 carries the post-translational modification Phosphoserine. A disordered region spans residues 412-461 (SSSSAKARAGPPGAHRSPATSAGPELAGLPRRPPGEPLQGFSKLGGGGLR). S462 bears the Phosphoserine mark. An RING-type zinc finger spans residues 469 to 509 (CMVCFESEVTAALVPCGHNLFCMECAVRICERTDPECPVCH).

In terms of processing, phosphorylated. As to expression, highest levels found in fetal brain and testis. Detected also in thymus, salivary gland and uterus.

It is found in the cytoplasm. The protein localises to the nucleus. Its subcellular location is the P-body. Its function is as follows. RNA binding protein, may be involved in post-transcriptional regulatory mechanisms. In Homo sapiens (Human), this protein is RNA-binding protein MEX3A (MEX3A).